Reading from the N-terminus, the 331-residue chain is Homoserine kinase (331 aa).

This sequence belongs to the pseudomonas-type ThrB family.

It catalyses the reaction L-homoserine + ATP = O-phospho-L-homoserine + ADP + H(+). Its pathway is amino-acid biosynthesis; L-threonine biosynthesis; L-threonine from L-aspartate: step 4/5. The chain is Homoserine kinase from Paraburkholderia phytofirmans (strain DSM 17436 / LMG 22146 / PsJN) (Burkholderia phytofirmans).